The sequence spans 231 residues: Ribonuclease 3 (231 aa).

Residues 5-134 (QEKLKNDYGL…FLGALFIDQG (130 aa)) enclose the RNase III domain. Glu47 contributes to the Mg(2+) binding site. Residue Asp51 is part of the active site. The Mg(2+) site is built by Asn120 and Glu123. Glu123 is an active-site residue. One can recognise a DRBM domain in the interval 160–229 (DYKTELQEVL…AENAIKGQNH (70 aa)).

Belongs to the ribonuclease III family. Homodimer. The cofactor is Mg(2+).

The protein resides in the cytoplasm. It carries out the reaction Endonucleolytic cleavage to 5'-phosphomonoester.. Digests double-stranded RNA. Involved in the processing of primary rRNA transcript to yield the immediate precursors to the large and small rRNAs (23S and 16S). Processes some mRNAs, and tRNAs when they are encoded in the rRNA operon. Processes pre-crRNA and tracrRNA of type II CRISPR loci if present in the organism. The chain is Ribonuclease 3 from Lactococcus lactis subsp. cremoris (strain SK11).